The sequence spans 239 residues: Protein GrpE (239 aa).

Disordered stretches follow at residues 1 to 56 (MIEN…KNTI) and 208 to 239 (SMGPGKQNSQQEVEKDTVEEDVNSEVNTSEDV). A compositionally biased stretch (basic and acidic residues) spans 40–53 (TSQKKEAINTEELK). Residues 224–239 (TVEEDVNSEVNTSEDV) are compositionally biased toward acidic residues.

Belongs to the GrpE family. As to quaternary structure, homodimer.

Its subcellular location is the cytoplasm. In terms of biological role, participates actively in the response to hyperosmotic and heat shock by preventing the aggregation of stress-denatured proteins, in association with DnaK and GrpE. It is the nucleotide exchange factor for DnaK and may function as a thermosensor. Unfolded proteins bind initially to DnaJ; upon interaction with the DnaJ-bound protein, DnaK hydrolyzes its bound ATP, resulting in the formation of a stable complex. GrpE releases ADP from DnaK; ATP binding to DnaK triggers the release of the substrate protein, thus completing the reaction cycle. Several rounds of ATP-dependent interactions between DnaJ, DnaK and GrpE are required for fully efficient folding. This is Protein GrpE from Prochlorococcus marinus (strain MIT 9215).